A 703-amino-acid polypeptide reads, in one-letter code: Elongation factor G 1 (703 aa).

A tr-type G domain is found at 8–291 (ERYRNIGISA…AVIDYLPSPV (284 aa)). GTP-binding positions include 17 to 24 (AHIDAGKT), 88 to 92 (DTPGH), and 142 to 145 (NKMD).

This sequence belongs to the TRAFAC class translation factor GTPase superfamily. Classic translation factor GTPase family. EF-G/EF-2 subfamily.

Its subcellular location is the cytoplasm. Catalyzes the GTP-dependent ribosomal translocation step during translation elongation. During this step, the ribosome changes from the pre-translocational (PRE) to the post-translocational (POST) state as the newly formed A-site-bound peptidyl-tRNA and P-site-bound deacylated tRNA move to the P and E sites, respectively. Catalyzes the coordinated movement of the two tRNA molecules, the mRNA and conformational changes in the ribosome. The chain is Elongation factor G 1 from Burkholderia orbicola (strain AU 1054).